A 318-amino-acid polypeptide reads, in one-letter code: NADH-ubiquinone oxidoreductase chain 1 (318 aa).

8 helical membrane-spanning segments follow: residues 1 to 21 (MLPITNSLTYIIPILIAVAFL), 71 to 91 (LLILSPILALTTAMLIWTPIP), 101 to 121 (LGLLSILAISSMAVNSTLWAG), 145 to 165 (VTLGIILLSILILTGGFTMQL), 172 to 192 (HIWLLTTSWPLTMMWFISTLA), 224 to 244 (FFLAEYTNIISMNLLTCIMFI), 253 to 273 (ELFLINLVTKTLLLSLTFLWI), and 294 to 314 (LPLTMALCLLQASLLVSISGI).

The protein belongs to the complex I subunit 1 family.

It is found in the mitochondrion inner membrane. It carries out the reaction a ubiquinone + NADH + 5 H(+)(in) = a ubiquinol + NAD(+) + 4 H(+)(out). Core subunit of the mitochondrial membrane respiratory chain NADH dehydrogenase (Complex I) that is believed to belong to the minimal assembly required for catalysis. Complex I functions in the transfer of electrons from NADH to the respiratory chain. The immediate electron acceptor for the enzyme is believed to be ubiquinone. The sequence is that of NADH-ubiquinone oxidoreductase chain 1 (MT-ND1) from Varanus rudicollis (Rough-necked monitor lizard).